The chain runs to 1303 residues: Alpha,alpha-trehalose-phosphate synthase [UDP-forming] 2 (1303 aa).

2 disordered regions span residues 1 to 48 (MTVV…NNTT) and 205 to 251 (LQRR…FRGK). Residues 212-221 (SSRGGSLRGS) show a composition bias toward low complexity.

It in the N-terminal section; belongs to the glycosyltransferase 20 family. The protein in the C-terminal section; belongs to the gob-1 trehalose phosphatase family.

It carries out the reaction D-glucose 6-phosphate + UDP-alpha-D-glucose = alpha,alpha-trehalose 6-phosphate + UDP + H(+). Catalyzes the production of trehalose from glucose-6-phosphate and UDP-alpha-D-glucose in a 2 step process. In Aphelenchoides avenae (Mycophagous nematode worm), this protein is Alpha,alpha-trehalose-phosphate synthase [UDP-forming] 2 (tps-2).